The chain runs to 149 residues: Deoxyuridine 5'-triphosphate nucleotidohydrolase (149 aa).

Residues 68 to 70 (RSG), asparagine 81, 85 to 87 (LID), and methionine 95 contribute to the substrate site.

This sequence belongs to the dUTPase family. Mg(2+) serves as cofactor.

It carries out the reaction dUTP + H2O = dUMP + diphosphate + H(+). It functions in the pathway pyrimidine metabolism; dUMP biosynthesis; dUMP from dCTP (dUTP route): step 2/2. Functionally, this enzyme is involved in nucleotide metabolism: it produces dUMP, the immediate precursor of thymidine nucleotides and it decreases the intracellular concentration of dUTP so that uracil cannot be incorporated into DNA. This is Deoxyuridine 5'-triphosphate nucleotidohydrolase from Bordetella pertussis (strain Tohama I / ATCC BAA-589 / NCTC 13251).